We begin with the raw amino-acid sequence, 102 residues long: Large ribosomal subunit protein bL21 (102 aa).

Belongs to the bacterial ribosomal protein bL21 family. Part of the 50S ribosomal subunit. Contacts protein L20.

In terms of biological role, this protein binds to 23S rRNA in the presence of protein L20. The protein is Large ribosomal subunit protein bL21 of Exiguobacterium sp. (strain ATCC BAA-1283 / AT1b).